We begin with the raw amino-acid sequence, 202 residues long: N-(5'-phosphoribosyl)anthranilate isomerase (202 aa).

The protein belongs to the TrpF family.

The catalysed reaction is N-(5-phospho-beta-D-ribosyl)anthranilate = 1-(2-carboxyphenylamino)-1-deoxy-D-ribulose 5-phosphate. Its pathway is amino-acid biosynthesis; L-tryptophan biosynthesis; L-tryptophan from chorismate: step 3/5. This Listeria monocytogenes serotype 4b (strain CLIP80459) protein is N-(5'-phosphoribosyl)anthranilate isomerase.